The following is a 255-amino-acid chain: Hydroxyacylglutathione hydrolase (255 aa).

His-56, His-58, Asp-60, His-61, His-114, Asp-133, and His-171 together coordinate Zn(2+).

This sequence belongs to the metallo-beta-lactamase superfamily. Glyoxalase II family. In terms of assembly, monomer. Zn(2+) serves as cofactor.

It carries out the reaction an S-(2-hydroxyacyl)glutathione + H2O = a 2-hydroxy carboxylate + glutathione + H(+). The protein operates within secondary metabolite metabolism; methylglyoxal degradation; (R)-lactate from methylglyoxal: step 2/2. In terms of biological role, thiolesterase that catalyzes the hydrolysis of S-D-lactoyl-glutathione to form glutathione and D-lactic acid. This is Hydroxyacylglutathione hydrolase from Chelativorans sp. (strain BNC1).